A 408-amino-acid chain; its full sequence is Serine/threonine-protein kinase ATG1t (408 aa).

The region spanning 7 to 272 is the Protein kinase domain; the sequence is YIAKSKLSES…GRIKNSRVWV (266 aa). Residues 13 to 21 and K36 each bind ATP; that span reads LSESLTSTV. D129 serves as the catalytic Proton acceptor.

It belongs to the protein kinase superfamily. Ser/Thr protein kinase family.

It is found in the cytoplasmic vesicle. It localises to the autophagosome. Serine/threonine protein kinase involved in autophagy. The ATG1-ATG13 protein kinase complex regulates downstream events required for autophagosome enclosure and/or vacuolar delivery. The sequence is that of Serine/threonine-protein kinase ATG1t from Arabidopsis thaliana (Mouse-ear cress).